The primary structure comprises 339 residues: Ketol-acid reductoisomerase (NADP(+)) (339 aa).

One can recognise a KARI N-terminal Rossmann domain in the interval 1 to 182 (MRVYYDRDAD…GGGRAGIIET (182 aa)). Residues 24 to 27 (YGSQ), Arg48, Ser51, Ser53, and 83 to 86 (DELQ) contribute to the NADP(+) site. His108 is an active-site residue. An NADP(+)-binding site is contributed by Gly134. The KARI C-terminal knotted domain occupies 183–328 (TFREECETDL…ARLRDMMPWI (146 aa)). Positions 191, 195, 227, and 231 each coordinate Mg(2+). Ser252 is a substrate binding site.

It belongs to the ketol-acid reductoisomerase family. Mg(2+) is required as a cofactor.

The catalysed reaction is (2R)-2,3-dihydroxy-3-methylbutanoate + NADP(+) = (2S)-2-acetolactate + NADPH + H(+). It carries out the reaction (2R,3R)-2,3-dihydroxy-3-methylpentanoate + NADP(+) = (S)-2-ethyl-2-hydroxy-3-oxobutanoate + NADPH + H(+). It participates in amino-acid biosynthesis; L-isoleucine biosynthesis; L-isoleucine from 2-oxobutanoate: step 2/4. The protein operates within amino-acid biosynthesis; L-valine biosynthesis; L-valine from pyruvate: step 2/4. In terms of biological role, involved in the biosynthesis of branched-chain amino acids (BCAA). Catalyzes an alkyl-migration followed by a ketol-acid reduction of (S)-2-acetolactate (S2AL) to yield (R)-2,3-dihydroxy-isovalerate. In the isomerase reaction, S2AL is rearranged via a Mg-dependent methyl migration to produce 3-hydroxy-3-methyl-2-ketobutyrate (HMKB). In the reductase reaction, this 2-ketoacid undergoes a metal-dependent reduction by NADPH to yield (R)-2,3-dihydroxy-isovalerate. This is Ketol-acid reductoisomerase (NADP(+)) from Nitrobacter winogradskyi (strain ATCC 25391 / DSM 10237 / CIP 104748 / NCIMB 11846 / Nb-255).